The primary structure comprises 90 residues: Mucin-like protein 1 (90 aa).

The N-terminal stretch at 1 to 20 is a signal peptide; it reads MKFLAVLVLLGVSIFLVSAQ. Threonine 23, threonine 24, threonine 30, threonine 34, threonine 46, threonine 47, threonine 51, threonine 52, threonine 54, threonine 55, threonine 59, threonine 60, threonine 62, and threonine 63 each carry an O-linked (GalNAc...) threonine glycan. Composition is skewed to low complexity over residues 25 to 36 and 44 to 68; these read AAPADTYPATGP and AETT…ASTT. Residues 25–68 are disordered; the sequence is AAPADTYPATGPADDEAPDAETTAAATTATTAAPTTATTAASTT. Tandem repeats lie at residues 46-53, 54-61, and 62-69. Residues 46–69 form a 3 X 8 AA tandem repeat of T-T-A-A-[APS]-T-T-A region; that stretch reads TTAAATTATTAAPTTATTAASTTA. Residue serine 66 is glycosylated (O-linked (GalNAc...) serine). O-linked (GalNAc...) threonine glycans are attached at residues threonine 67 and threonine 68.

In terms of processing, O-glycosylated. Expressed in mammary, salivary glands and prostate. Also detected in lung. Mainly expressed in cancer cell lines of breast origin. Highly expressed in lymph node-positive compared with node-negative tumors. Detected in all lymph node containing metastatic cells.

It is found in the secreted. Its subcellular location is the membrane. May play a role as marker for the diagnosis of metastatic breast cancer. The sequence is that of Mucin-like protein 1 (MUCL1) from Homo sapiens (Human).